The chain runs to 147 residues: uncharacterized protein (147 aa).

Positions 2-63 (LDELDKKIIG…KLNYENIGYD (62 aa)) constitute an HTH asnC-type domain. The segment at residues 21–40 (YREIAKELNVAVGTIYNRIK) is a DNA-binding region (H-T-H motif).

This is an uncharacterized protein from Pyrococcus abyssi (strain GE5 / Orsay).